The primary structure comprises 382 residues: Kelch domain-containing protein 3 (382 aa).

Kelch repeat units lie at residues 25-77 (RVYS…PYMR), 88-138 (TVLL…VLGK), 139-189 (IMYI…TMLG), 191-249 (HMYV…GYNG), and 251-301 (LYIF…IVGD).

As to quaternary structure, component of a CRL2(KLHDC3) complex, also named ECS(KLHDC3) complex, composed of CUL2, Elongin BC (ELOB and ELOC), RBX1 and substrate-specific adapter KLHDC3. May form oligomers as a KLHDC3-ELOB-ELOC complex; this interaction is likely autoinhibitory for the E3 ligase complex.

Its subcellular location is the cytoplasm. It functions in the pathway protein modification; protein ubiquitination. Its function is as follows. Substrate-recognition component of a Cul2-RING (CRL2) E3 ubiquitin-protein ligase complex of the DesCEND (destruction via C-end degrons) pathway, which recognizes a C-degron located at the extreme C terminus of target proteins, leading to their ubiquitination and degradation. The C-degron recognized by the DesCEND pathway is usually a motif of less than ten residues and can be present in full-length proteins, truncated proteins or proteolytically cleaved forms. The CRL2(KLHDC3) complex specifically recognizes proteins with a glycine (Gly) at the C-terminus, leading to their ubiquitination and degradation: recognizes the C-terminal -Arg-(Xaa)n-Arg-Gly, -Arg-(Xaa)n-Lys-Gly, and -Arg-(Xaa)n-Gln-Gly degrons. The CRL2(KLHDC3) complex mediates ubiquitination and degradation of truncated SELENOV and SEPHS2 selenoproteins produced by failed UGA/Sec decoding, which end with a glycine. May be involved in meiotic recombination process. The chain is Kelch domain-containing protein 3 from Homo sapiens (Human).